Here is a 347-residue protein sequence, read N- to C-terminus: Mediator of RNA polymerase II transcription subunit 7 (347 aa).

Disordered regions lie at residues 97–172 and 302–326; these read GIER…TQTH and VPVG…GAEE. Low complexity-rich tracts occupy residues 108-171 and 302-312; these read STTT…STQT and VPVGARTGTTV.

This sequence belongs to the Mediator complex subunit 7 family. As to quaternary structure, component of the Mediator complex.

Its subcellular location is the nucleus. In terms of biological role, component of the Mediator complex, a coactivator involved in the regulated transcription of nearly all RNA polymerase II-dependent genes. Mediator functions as a bridge to convey information from gene-specific regulatory proteins to the basal RNA polymerase II transcription machinery. Mediator is recruited to promoters by direct interactions with regulatory proteins and serves as a scaffold for the assembly of a functional preinitiation complex with RNA polymerase II and the general transcription factors. The sequence is that of Mediator of RNA polymerase II transcription subunit 7 (med-7) from Neurospora crassa (strain ATCC 24698 / 74-OR23-1A / CBS 708.71 / DSM 1257 / FGSC 987).